A 449-amino-acid polypeptide reads, in one-letter code: Chromosomal replication initiator protein DnaA (449 aa).

The domain I, interacts with DnaA modulators stretch occupies residues 1 to 73; that stretch reads MTQNPQWLWQ…TETIAELLQQ (73 aa). The interval 73 to 109 is domain II; the sequence is QPVKVRLTSPEGNTLAATQSFYSSRSGQSTRPGKKTP. Positions 90–103 are enriched in polar residues; it reads TQSFYSSRSGQSTR. The disordered stretch occupies residues 90-110; that stretch reads TQSFYSSRSGQSTRPGKKTPE. Positions 110–326 are domain III, AAA+ region; it reads ELNSKYTFSR…GALLRAVTHI (217 aa). Positions 154, 156, 157, and 158 each coordinate ATP. The interval 327–449 is domain IV, binds dsDNA; sequence AISGLPMTVE…DRINHHHQNL (123 aa).

Belongs to the DnaA family. As to quaternary structure, oligomerizes as a right-handed, spiral filament on DNA at oriC.

The protein localises to the cytoplasm. In terms of biological role, plays an essential role in the initiation and regulation of chromosomal replication. ATP-DnaA binds to the origin of replication (oriC) to initiate formation of the DNA replication initiation complex once per cell cycle. Binds the DnaA box (a 9 base pair repeat at the origin) and separates the double-stranded (ds)DNA. Forms a right-handed helical filament on oriC DNA; dsDNA binds to the exterior of the filament while single-stranded (ss)DNA is stabiized in the filament's interior. The ATP-DnaA-oriC complex binds and stabilizes one strand of the AT-rich DNA unwinding element (DUE), permitting loading of DNA polymerase. After initiation quickly degrades to an ADP-DnaA complex that is not apt for DNA replication. Binds acidic phospholipids. The chain is Chromosomal replication initiator protein DnaA from Picosynechococcus sp. (strain ATCC 27264 / PCC 7002 / PR-6) (Agmenellum quadruplicatum).